We begin with the raw amino-acid sequence, 208 residues long: Interleukin-6 (208 aa).

A signal peptide spans 1-20 (MNSLSTIAFSLGLLLVTATA). Cysteines 67 and 73 form a disulfide. Ser76 carries the phosphoserine modification. Cys96 and Cys106 form a disulfide bridge. Asn167 carries N-linked (GlcNAc...) asparagine glycosylation.

Belongs to the IL-6 superfamily. Component of a hexamer of two molecules each of IL6, IL6R and IL6ST; first binds to IL6R to associate with the signaling subunit IL6ST. Interacts with IL6R (via the N-terminal ectodomain); this interaction may be affected by IL6R-binding with SORL1, hence decreasing IL6 cis signaling. Interacts with SORL1 (via the N-terminal ectodomain); this interaction leads to IL6 internalization and lysosomal degradation. May form a trimeric complex with the soluble SORL1 ectodomain and soluble IL6R receptor; this interaction might stabilize circulating IL6, hence promoting IL6 trans signaling.

Its subcellular location is the secreted. Cytokine with a wide variety of biological functions in immunity, tissue regeneration, and metabolism. Binds to IL6R, then the complex associates to the signaling subunit IL6ST/gp130 to trigger the intracellular IL6-signaling pathway. The interaction with the membrane-bound IL6R and IL6ST stimulates 'classic signaling', whereas the binding of IL6 and soluble IL6R to IL6ST stimulates 'trans-signaling'. Alternatively, 'cluster signaling' occurs when membrane-bound IL6:IL6R complexes on transmitter cells activate IL6ST receptors on neighboring receiver cells. Its function is as follows. IL6 is a potent inducer of the acute phase response. Rapid production of IL6 contributes to host defense during infection and tissue injury, but excessive IL6 synthesis is involved in disease pathology. In the innate immune response, is synthesized by myeloid cells, such as macrophages and dendritic cells, upon recognition of pathogens through toll-like receptors (TLRs) at the site of infection or tissue injury. In the adaptive immune response, is required for the differentiation of B cells into immunoglobulin-secreting cells. Plays a major role in the differentiation of CD4(+) T cell subsets. Essential factor for the development of T follicular helper (Tfh) cells that are required for the induction of germinal-center formation. Required to drive naive CD4(+) T cells to the Th17 lineage. Also required for proliferation of myeloma cells and the survival of plasmablast cells. In terms of biological role, acts as an essential factor in bone homeostasis and on vessels directly or indirectly by induction of VEGF, resulting in increased angiogenesis activity and vascular permeability. Induces, through 'trans-signaling' and synergistically with IL1B and TNF, the production of VEGF. Involved in metabolic controls, is discharged into the bloodstream after muscle contraction increasing lipolysis and improving insulin resistance. 'Trans-signaling' in central nervous system also regulates energy and glucose homeostasis. Mediates, through GLP-1, crosstalk between insulin-sensitive tissues, intestinal L cells and pancreatic islets to adapt to changes in insulin demand. Also acts as a myokine. Plays a protective role during liver injury, being required for maintenance of tissue regeneration. Also has a pivotal role in iron metabolism by regulating HAMP/hepcidin expression upon inflammation or bacterial infection. Through activation of IL6ST-YAP-NOTCH pathway, induces inflammation-induced epithelial regeneration. The polypeptide is Interleukin-6 (IL6) (Delphinapterus leucas (Beluga whale)).